Reading from the N-terminus, the 308-residue chain is Glutaminase (308 aa).

Substrate is bound by residues Ser66, Asn117, Glu161, Asn168, Tyr192, Tyr244, and Val262.

Belongs to the glutaminase family. In terms of assembly, homotetramer.

It carries out the reaction L-glutamine + H2O = L-glutamate + NH4(+). This chain is Glutaminase, found in Photorhabdus laumondii subsp. laumondii (strain DSM 15139 / CIP 105565 / TT01) (Photorhabdus luminescens subsp. laumondii).